We begin with the raw amino-acid sequence, 971 residues long: Exportin-2 (971 aa).

Methionine 1 carries the N-acetylmethionine modification. Residues 29–102 (AEKFLESVEG…KANIVHLMLS (74 aa)) enclose the Importin N-terminal domain. Position 112 is a phosphoserine (serine 112). 2 positions are modified to N6-acetyllysine: lysine 574 and lysine 824. The residue at position 931 (serine 931) is a Phosphoserine.

The protein belongs to the XPO2/CSE1 family. Found in a complex with CSE1L/XPO2, Ran and KPNA2. Binds with high affinity to importin-alpha only in the presence of RanGTP. The complex is dissociated by the combined action of RanBP1 and RanGAP1. Interacts with CFTR.

Its subcellular location is the cytoplasm. The protein resides in the nucleus. In terms of biological role, export receptor for importin-alpha. Mediates importin-alpha re-export from the nucleus to the cytoplasm after import substrates (cargos) have been released into the nucleoplasm. In the nucleus binds cooperatively to importin-alpha and to the GTPase Ran in its active GTP-bound form. Docking of this trimeric complex to the nuclear pore complex (NPC) is mediated through binding to nucleoporins. Upon transit of a nuclear export complex into the cytoplasm, disassembling of the complex and hydrolysis of Ran-GTP to Ran-GDP (induced by RANBP1 and RANGAP1, respectively) cause release of the importin-alpha from the export receptor. CSE1L/XPO2 then return to the nuclear compartment and mediate another round of transport. The directionality of nuclear export is thought to be conferred by an asymmetric distribution of the GTP- and GDP-bound forms of Ran between the cytoplasm and nucleus. This is Exportin-2 (CSE1L) from Pongo abelii (Sumatran orangutan).